Here is a 97-residue protein sequence, read N- to C-terminus: Co-chaperonin GroES (97 aa).

It belongs to the GroES chaperonin family. In terms of assembly, heptamer of 7 subunits arranged in a ring. Interacts with the chaperonin GroEL.

The protein resides in the cytoplasm. In terms of biological role, together with the chaperonin GroEL, plays an essential role in assisting protein folding. The GroEL-GroES system forms a nano-cage that allows encapsulation of the non-native substrate proteins and provides a physical environment optimized to promote and accelerate protein folding. GroES binds to the apical surface of the GroEL ring, thereby capping the opening of the GroEL channel. The sequence is that of Co-chaperonin GroES from Buchnera aphidicola subsp. Geoica urticularia.